A 948-amino-acid polypeptide reads, in one-letter code: FRIGIDA-like protein 5 (948 aa).

A coiled-coil region spans residues 47–164 (DSTRSVLEER…VEKHRERIVA (118 aa)). Disordered stretches follow at residues 447-500 (ESAQ…APSQ), 518-538 (VKESGADHQPDTIATHPSGTE), and 804-894 (RNTS…YPSH). Composition is skewed to basic and acidic residues over residues 459 to 475 (SYEKRQSTTKGVEKSEA) and 518 to 527 (VKESGADHQP). The span at 807–817 (SNGSGSGSASS) shows a compositional bias: low complexity. Residues 818–830 (KPDSTIKQSQTAK) are compositionally biased toward polar residues. The span at 861–872 (FSKKNKRGKKRS) shows a compositional bias: basic residues. Over residues 873–894 (MSGNNQSSGHIASHTSNHYPSH) the composition is skewed to polar residues.

This sequence belongs to the Frigida family. Expressed at low levels during seed development.

The protein is FRIGIDA-like protein 5 (FRL5) of Arabidopsis thaliana (Mouse-ear cress).